Consider the following 205-residue polypeptide: Putative STAG3-like protein 1 (205 aa).

Positions Pro-10–Met-95 constitute an SCD domain.

It belongs to the SCC3 family.

The protein localises to the nucleus. The protein is Putative STAG3-like protein 1 (STAG3L1) of Homo sapiens (Human).